The primary structure comprises 463 residues: UDP-N-acetylmuramoylalanine--D-glutamate ligase (463 aa).

109–115 (GTDGKST) serves as a coordination point for ATP.

The protein belongs to the MurCDEF family.

It localises to the cytoplasm. It catalyses the reaction UDP-N-acetyl-alpha-D-muramoyl-L-alanine + D-glutamate + ATP = UDP-N-acetyl-alpha-D-muramoyl-L-alanyl-D-glutamate + ADP + phosphate + H(+). It functions in the pathway cell wall biogenesis; peptidoglycan biosynthesis. Functionally, cell wall formation. Catalyzes the addition of glutamate to the nucleotide precursor UDP-N-acetylmuramoyl-L-alanine (UMA). This Leptospira interrogans serogroup Icterohaemorrhagiae serovar Lai (strain 56601) protein is UDP-N-acetylmuramoylalanine--D-glutamate ligase.